A 277-amino-acid chain; its full sequence is Urease accessory protein UreD (277 aa).

This sequence belongs to the UreD family. UreD, UreF and UreG form a complex that acts as a GTP-hydrolysis-dependent molecular chaperone, activating the urease apoprotein by helping to assemble the nickel containing metallocenter of UreC. The UreE protein probably delivers the nickel.

The protein resides in the cytoplasm. Required for maturation of urease via the functional incorporation of the urease nickel metallocenter. This Pseudomonas putida (strain ATCC 47054 / DSM 6125 / CFBP 8728 / NCIMB 11950 / KT2440) protein is Urease accessory protein UreD.